Consider the following 193-residue polypeptide: Large ribosomal subunit protein eL18 (193 aa).

Positions 158–193 (HFGAAGVPGSHAKPFTSNRGKERQRSSARRRAFRHK) are disordered. The segment covering 183 to 193 (SSARRRAFRHK) has biased composition (basic residues).

This sequence belongs to the eukaryotic ribosomal protein eL18 family.

It is found in the cytoplasm. The polypeptide is Large ribosomal subunit protein eL18 (RPL18) (Trypanosoma cruzi (strain CL Brener)).